The chain runs to 161 residues: Ecotin (161 aa).

The signal sequence occupies residues 1 to 23 (MGNFTVRATAGLMLASLSTLAHA). A disulfide bond links Cys-69 and Cys-106.

This sequence belongs to the protease inhibitor I11 (ecotin) family. As to quaternary structure, homodimer.

It is found in the periplasm. In terms of biological role, general inhibitor of family S1 serine proteases. The protein is Ecotin of Pseudomonas fluorescens (strain Pf0-1).